A 53-amino-acid chain; its full sequence is Chlorophyll a-b binding protein 1, chloroplastic (53 aa).

Phenylalanine 18 serves as a coordination point for chlorophyll b. The chlorophyll a site is built by glutamate 48 and histidine 51. A chlorophyll b-binding site is contributed by arginine 53.

It belongs to the light-harvesting chlorophyll a/b-binding (LHC) protein family. The LHC complex consists of chlorophyll a-b binding proteins. Binds at least 14 chlorophylls (8 Chl-a and 6 Chl-b) and carotenoids such as lutein and neoxanthin. is required as a cofactor. Post-translationally, photoregulated by reversible phosphorylation of its threonine residues.

The protein localises to the plastid. It localises to the chloroplast thylakoid membrane. The light-harvesting complex (LHC) functions as a light receptor, it captures and delivers excitation energy to photosystems with which it is closely associated. The protein is Chlorophyll a-b binding protein 1, chloroplastic of Populus euphratica (Euphrates poplar).